We begin with the raw amino-acid sequence, 683 residues long: DNA ligase 2 (683 aa).

NAD(+) contacts are provided by residues 27-31 (DGEFD), 76-77 (SL), and Glu-106. Lys-108 functions as the N6-AMP-lysine intermediate in the catalytic mechanism. NAD(+) is bound by residues Arg-129, Glu-169, Lys-285, and Lys-309. Positions 403, 406, 422, and 428 each coordinate Zn(2+). The region spanning 592 to 681 (SIERTLEGLS…PAAVAAEEPE (90 aa)) is the BRCT domain.

Belongs to the NAD-dependent DNA ligase family. LigA subfamily. It depends on Mg(2+) as a cofactor. Mn(2+) serves as cofactor.

The enzyme catalyses NAD(+) + (deoxyribonucleotide)n-3'-hydroxyl + 5'-phospho-(deoxyribonucleotide)m = (deoxyribonucleotide)n+m + AMP + beta-nicotinamide D-nucleotide.. DNA ligase that catalyzes the formation of phosphodiester linkages between 5'-phosphoryl and 3'-hydroxyl groups in double-stranded DNA using NAD as a coenzyme and as the energy source for the reaction. It is essential for DNA replication and repair of damaged DNA. This chain is DNA ligase 2, found in Nocardia farcinica (strain IFM 10152).